The primary structure comprises 458 residues: NADH-ubiquinone oxidoreductase chain 4 (458 aa).

Transmembrane regions (helical) follow at residues 21 to 43 (ASLW…QWLN), 58 to 78 (IDQI…LMLL), 93 to 112 (RTFI…AFSA), 116 to 138 (TLFY…RWGN), 145 to 165 (AGIY…VTIL), 196 to 216 (GLAL…HLWL), 224 to 244 (PIAG…YGIM), 257 to 277 (LSYP…SICL), 285 to 305 (LIAY…MIQT), 309 to 329 (FSGA…LFCL), 341 to 361 (ILLL…WWLL), and 379 to 399 (LTIM…TGLA).

The protein belongs to the complex I subunit 4 family.

The protein localises to the mitochondrion membrane. It carries out the reaction a ubiquinone + NADH + 5 H(+)(in) = a ubiquinol + NAD(+) + 4 H(+)(out). Core subunit of the mitochondrial membrane respiratory chain NADH dehydrogenase (Complex I) that is believed to belong to the minimal assembly required for catalysis. Complex I functions in the transfer of electrons from NADH to the respiratory chain. The immediate electron acceptor for the enzyme is believed to be ubiquinone. The sequence is that of NADH-ubiquinone oxidoreductase chain 4 (MT-ND4) from Struthio camelus (Common ostrich).